The primary structure comprises 126 residues: Histone H2B type 1-N (126 aa).

A compositionally biased stretch (low complexity) spans 1–12 (MPEPSKSAPAPK). Residues 1-36 (MPEPSKSAPAPKKGSKKAVTKAQKKDGKKRKRSRKE) are disordered. At Pro2 the chain carries N-acetylproline. Glu3 carries the post-translational modification ADP-ribosyl glutamic acid. At Lys6 the chain carries N6-(2-hydroxyisobutyryl)lysine; alternate. Lys6 is subject to N6-(beta-hydroxybutyryl)lysine; alternate. Lys6 is subject to N6-acetyllysine; alternate. Lys6 is modified (N6-butyryllysine; alternate). At Lys6 the chain carries N6-crotonyllysine; alternate. The residue at position 6 (Lys6) is an N6-lactoyllysine; alternate. Lys6 is covalently cross-linked (Glycyl lysine isopeptide (Lys-Gly) (interchain with G-Cter in SUMO2); alternate). An ADP-ribosylserine modification is found at Ser7. Residue Lys12 is modified to N6-(beta-hydroxybutyryl)lysine; alternate. N6-acetyllysine; alternate occurs at positions 12 and 13. N6-crotonyllysine; alternate is present on residues Lys12 and Lys13. N6-lactoyllysine; alternate is present on Lys12. Lys13 is subject to N6-(2-hydroxyisobutyryl)lysine; alternate. Ser15 bears the Phosphoserine; by STK4/MST1 mark. An N6-acetyllysine; alternate mark is found at Lys16, Lys17, Lys21, and Lys24. Residues Lys16, Lys17, Lys21, and Lys24 each carry the N6-crotonyllysine; alternate modification. 4 positions are modified to N6-lactoyllysine; alternate: Lys16, Lys17, Lys21, and Lys24. Lys17 and Lys21 each carry N6-(beta-hydroxybutyryl)lysine; alternate. The residue at position 17 (Lys17) is an N6-glutaryllysine; alternate. Residues Lys21 and Lys24 each carry the N6-(2-hydroxyisobutyryl)lysine; alternate modification. An N6-butyryllysine; alternate modification is found at Lys21. Lys21 is covalently cross-linked (Glycyl lysine isopeptide (Lys-Gly) (interchain with G-Cter in SUMO2); alternate). Lys25 carries the N6-(2-hydroxyisobutyryl)lysine modification. Lys35 is modified (N6-(2-hydroxyisobutyryl)lysine; alternate). Lys35 carries the post-translational modification N6-(beta-hydroxybutyryl)lysine; alternate. At Lys35 the chain carries N6-crotonyllysine; alternate. An N6-glutaryllysine; alternate modification is found at Lys35. An N6-succinyllysine; alternate modification is found at Lys35. A Glycyl lysine isopeptide (Lys-Gly) (interchain with G-Cter in ubiquitin); alternate cross-link involves residue Lys35. Glu36 is modified (polyADP-ribosyl glutamic acid). Ser37 is modified (phosphoserine; by AMPK). N6-(2-hydroxyisobutyryl)lysine; alternate occurs at positions 44, 47, and 58. Residue Lys44 is modified to N6-lactoyllysine; alternate. Lys44 and Lys47 each carry N6-glutaryllysine; alternate. Residue Lys47 is modified to N6-methyllysine; alternate. Lys58 bears the N6,N6-dimethyllysine; alternate mark. Arg80 bears the Dimethylated arginine mark. Position 86 is an N6-(2-hydroxyisobutyryl)lysine; alternate (Lys86). Position 86 is an N6-(beta-hydroxybutyryl)lysine; alternate (Lys86). At Lys86 the chain carries N6-acetyllysine; alternate. Residue Lys86 is modified to N6-lactoyllysine; alternate. An N6,N6,N6-trimethyllysine; alternate modification is found at Lys86. An omega-N-methylarginine mark is found at Arg87 and Arg93. The residue at position 109 (Lys109) is an N6-(2-hydroxyisobutyryl)lysine; alternate. The residue at position 109 (Lys109) is an N6-lactoyllysine; alternate. Residue Lys109 is modified to N6-glutaryllysine; alternate. Lys109 bears the N6-methyllysine; alternate mark. A glycan (O-linked (GlcNAc) serine) is linked at Ser113. Thr116 carries the post-translational modification Phosphothreonine. 2 positions are modified to N6-(2-hydroxyisobutyryl)lysine; alternate: Lys117 and Lys121. 2 positions are modified to N6-(beta-hydroxybutyryl)lysine; alternate: Lys117 and Lys121. Lys117 and Lys121 each carry N6-lactoyllysine; alternate. Residues Lys117 and Lys121 each carry the N6-glutaryllysine; alternate modification. An N6-succinyllysine; alternate mark is found at Lys117 and Lys121. At Lys117 the chain carries N6-malonyllysine; alternate. Residue Lys117 is modified to N6-methylated lysine; alternate. Residue Lys121 forms a Glycyl lysine isopeptide (Lys-Gly) (interchain with G-Cter in ubiquitin); alternate linkage.

Belongs to the histone H2B family. In terms of assembly, the nucleosome is a histone octamer containing two molecules each of H2A, H2B, H3 and H4 assembled in one H3-H4 heterotetramer and two H2A-H2B heterodimers. The octamer wraps approximately 147 bp of DNA. In terms of processing, monoubiquitination at Lys-35 (H2BK34Ub) by the MSL1/MSL2 dimer is required for histone H3 'Lys-4' (H3K4me) and 'Lys-79' (H3K79me) methylation and transcription activation at specific gene loci, such as HOXA9 and MEIS1 loci. Similarly, monoubiquitination at Lys-121 (H2BK120Ub) by the RNF20/40 complex gives a specific tag for epigenetic transcriptional activation and is also prerequisite for histone H3 'Lys-4' and 'Lys-79' methylation. It also functions cooperatively with the FACT dimer to stimulate elongation by RNA polymerase II. H2BK120Ub also acts as a regulator of mRNA splicing: deubiquitination by USP49 is required for efficient cotranscriptional splicing of a large set of exons. Phosphorylation at Ser-37 (H2BS36ph) by AMPK in response to stress promotes transcription. Phosphorylated on Ser-15 (H2BS14ph) by STK4/MST1 during apoptosis; which facilitates apoptotic chromatin condensation. Also phosphorylated on Ser-15 in response to DNA double strand breaks (DSBs), and in correlation with somatic hypermutation and immunoglobulin class-switch recombination. Post-translationally, glcNAcylation at Ser-113 promotes monoubiquitination of Lys-121. It fluctuates in response to extracellular glucose, and associates with transcribed genes. In terms of processing, ADP-ribosylated by PARP1 or PARP2 on Ser-7 (H2BS6ADPr) in response to DNA damage. H2BS6ADPr promotes recruitment of CHD1L. Mono-ADP-ribosylated on Glu-3 (H2BE2ADPr) by PARP3 in response to single-strand breaks. Poly ADP-ribosylation on Glu-36 (H2BE35ADPr) by PARP1 regulates adipogenesis: it inhibits phosphorylation at Ser-37 (H2BS36ph), thereby blocking expression of pro-adipogenetic genes. Crotonylation (Kcr) is specifically present in male germ cells and marks testis-specific genes in post-meiotic cells, including X-linked genes that escape sex chromosome inactivation in haploid cells. Crotonylation marks active promoters and enhancers and confers resistance to transcriptional repressors. It is also associated with post-meiotically activated genes on autosomes. Post-translationally, lactylated in macrophages by EP300/P300 by using lactoyl-CoA directly derived from endogenous or exogenous lactate, leading to stimulates gene transcription.

Its subcellular location is the nucleus. The protein resides in the chromosome. Core component of nucleosome. Nucleosomes wrap and compact DNA into chromatin, limiting DNA accessibility to the cellular machineries which require DNA as a template. Histones thereby play a central role in transcription regulation, DNA repair, DNA replication and chromosomal stability. DNA accessibility is regulated via a complex set of post-translational modifications of histones, also called histone code, and nucleosome remodeling. The protein is Histone H2B type 1-N of Homo sapiens (Human).